Here is a 452-residue protein sequence, read N- to C-terminus: Maltoporin (452 aa).

The N-terminal stretch at 1 to 25 (MMITLRKLPLAVAVAAGVMSAQAMA) is a signal peptide.

It belongs to the porin LamB (TC 1.B.3) family. As to quaternary structure, homotrimer formed of three 18-stranded antiparallel beta-barrels, containing three independent channels.

The protein localises to the cell outer membrane. The catalysed reaction is beta-maltose(in) = beta-maltose(out). In terms of biological role, involved in the transport of maltose and maltodextrins. In Salmonella heidelberg (strain SL476), this protein is Maltoporin.